Reading from the N-terminus, the 1320-residue chain is FERM and PDZ domain-containing protein 4 (1320 aa).

Residues 33–66 enclose the WW domain; sequence QVPPYGWEMMTNRDGRDYFINHMTQAIPFDDPRF. One can recognise a PDZ domain in the interval 78 to 155; sequence KVEMRRDPVL…SILLTVIQPY (78 aa). One can recognise an FERM domain in the interval 204-519; sequence NVLKVYLENG…GYYRLLVDSR (316 aa). Disordered regions lie at residues 809 to 847, 897 to 927, 949 to 981, 1024 to 1050, 1114 to 1139, and 1204 to 1274; these read APPP…EIPV, YSPE…QKQS, TEFP…PPKV, KRKS…QQGT, PRGP…ADDA, and GHFS…ATFE. Over residues 900 to 913 the composition is skewed to low complexity; the sequence is ESSSDSGNETNSSE. Positions 1204–1217 are enriched in polar residues; the sequence is GHFSLQSSQGSSVD. Residues 1223–1232 show a composition bias toward low complexity; it reads GSSSSACATP.

As to quaternary structure, interacts (via C-terminus) with DLG1, DLG2, DLG3 and DLG4/PSD95. Interacts (via N-terminus) with ARHGEF7; the interaction is mediated by the PDZ domain. Interacts with GPSM2 (via TPR repeat region). Expressed in various regions of the brain, including cortex, hippocampus, cerebellum, olfactory bulb and medial habenular nucleus.

The protein resides in the cell projection. Its subcellular location is the dendritic spine. In terms of biological role, positive regulator of dendritic spine morphogenesis and density. Required for the maintenance of excitatory synaptic transmission. Binds phosphatidylinositol 4,5-bisphosphate. The sequence is that of FERM and PDZ domain-containing protein 4 (Frmpd4) from Mus musculus (Mouse).